The sequence spans 396 residues: Probable sugar efflux transporter (396 aa).

Helical transmembrane passes span 15 to 35, 51 to 71, 84 to 104, 109 to 129, 137 to 157, 168 to 188, 209 to 229, 245 to 265, 273 to 293, 297 to 317, 333 to 353, and 365 to 385; these read VLIM…PVAM, GLMM…AMLA, LFII…FWIL, MCIA…VMRI, QALG…LPIG, VTFG…IRLL, PLLL…FTAY, NFAT…SLLF, PTKF…LLLF, TIIA…CIGL, VATA…ALFG, and IGYT…TTHL.

Belongs to the major facilitator superfamily. SotB (TC 2.A.1.2) family.

It is found in the cell inner membrane. Involved in the efflux of sugars. The physiological role may be the reduction of the intracellular concentration of toxic sugars or sugar metabolites. The chain is Probable sugar efflux transporter from Haemophilus influenzae (strain ATCC 51907 / DSM 11121 / KW20 / Rd).